A 189-amino-acid polypeptide reads, in one-letter code: Elongation factor P (189 aa).

It belongs to the elongation factor P family.

The protein resides in the cytoplasm. It functions in the pathway protein biosynthesis; polypeptide chain elongation. Functionally, involved in peptide bond synthesis. Stimulates efficient translation and peptide-bond synthesis on native or reconstituted 70S ribosomes in vitro. Probably functions indirectly by altering the affinity of the ribosome for aminoacyl-tRNA, thus increasing their reactivity as acceptors for peptidyl transferase. The protein is Elongation factor P of Sinorhizobium medicae (strain WSM419) (Ensifer medicae).